The following is a 137-amino-acid chain: Nucleoside diphosphate kinase (137 aa).

Positions 10, 59, 87, 93, 104, and 114 each coordinate ATP. His117 (pros-phosphohistidine intermediate) is an active-site residue.

The protein belongs to the NDK family. As to quaternary structure, homotetramer. It depends on Mg(2+) as a cofactor.

The protein localises to the cytoplasm. The enzyme catalyses a 2'-deoxyribonucleoside 5'-diphosphate + ATP = a 2'-deoxyribonucleoside 5'-triphosphate + ADP. It catalyses the reaction a ribonucleoside 5'-diphosphate + ATP = a ribonucleoside 5'-triphosphate + ADP. In terms of biological role, major role in the synthesis of nucleoside triphosphates other than ATP. The ATP gamma phosphate is transferred to the NDP beta phosphate via a ping-pong mechanism, using a phosphorylated active-site intermediate. This Streptomyces avermitilis (strain ATCC 31267 / DSM 46492 / JCM 5070 / NBRC 14893 / NCIMB 12804 / NRRL 8165 / MA-4680) protein is Nucleoside diphosphate kinase.